The following is a 471-amino-acid chain: Glutamate--tRNA ligase (471 aa).

The short motif at 9–19 is the 'HIGH' region element; that stretch reads PSPTGYLHVGG. Zn(2+) is bound by residues Cys98, Cys100, Cys125, and His127. The 'KMSKS' region signature appears at 237 to 241; it reads KLSKR. Lys240 contributes to the ATP binding site.

The protein belongs to the class-I aminoacyl-tRNA synthetase family. Glutamate--tRNA ligase type 1 subfamily. In terms of assembly, monomer. The cofactor is Zn(2+).

The protein resides in the cytoplasm. The catalysed reaction is tRNA(Glu) + L-glutamate + ATP = L-glutamyl-tRNA(Glu) + AMP + diphosphate. In terms of biological role, catalyzes the attachment of glutamate to tRNA(Glu) in a two-step reaction: glutamate is first activated by ATP to form Glu-AMP and then transferred to the acceptor end of tRNA(Glu). This chain is Glutamate--tRNA ligase, found in Escherichia coli (strain SMS-3-5 / SECEC).